The chain runs to 199 residues: Segregation and condensation protein B (199 aa).

This sequence belongs to the ScpB family. Homodimer. Homodimerization may be required to stabilize the binding of ScpA to the Smc head domains. Component of a cohesin-like complex composed of ScpA, ScpB and the Smc homodimer, in which ScpA and ScpB bind to the head domain of Smc. The presence of the three proteins is required for the association of the complex with DNA.

Its subcellular location is the cytoplasm. Functionally, participates in chromosomal partition during cell division. May act via the formation of a condensin-like complex containing Smc and ScpA that pull DNA away from mid-cell into both cell halves. This chain is Segregation and condensation protein B, found in Leuconostoc mesenteroides subsp. mesenteroides (strain ATCC 8293 / DSM 20343 / BCRC 11652 / CCM 1803 / JCM 6124 / NCDO 523 / NBRC 100496 / NCIMB 8023 / NCTC 12954 / NRRL B-1118 / 37Y).